We begin with the raw amino-acid sequence, 172 residues long: Small ribosomal subunit protein uS5 (172 aa).

The region spanning 17–80 (LREKMISVNR…DEARRKMVKV (64 aa)) is the S5 DRBM domain.

It belongs to the universal ribosomal protein uS5 family. Part of the 30S ribosomal subunit. Contacts proteins S4 and S8.

In terms of biological role, with S4 and S12 plays an important role in translational accuracy. Located at the back of the 30S subunit body where it stabilizes the conformation of the head with respect to the body. The polypeptide is Small ribosomal subunit protein uS5 (Cupriavidus metallidurans (strain ATCC 43123 / DSM 2839 / NBRC 102507 / CH34) (Ralstonia metallidurans)).